A 246-amino-acid polypeptide reads, in one-letter code: Probable transcriptional regulatory protein CLB_3102 (246 aa).

The protein belongs to the TACO1 family.

It is found in the cytoplasm. The sequence is that of Probable transcriptional regulatory protein CLB_3102 from Clostridium botulinum (strain ATCC 19397 / Type A).